The primary structure comprises 683 residues: Probable potassium transport system protein Kup 1 (683 aa).

12 consecutive transmembrane segments (helical) span residues 13–33 (GLLI…LYVM), 55–75 (ISLV…FIAL), 98–118 (WLVL…TLTP), 139–159 (VPVS…LLLF), 168–188 (IIGK…GVIG), 218–238 (AGIF…ALYS), 251–271 (SWPY…VWIL), 296–316 (LAAI…LITG), 345–365 (IYIP…VLFF), 376–396 (GLSI…WLAM), 401–421 (TIWN…FMLA), and 426–446 (FMHG…IMYV).

This sequence belongs to the HAK/KUP transporter (TC 2.A.72) family.

The protein localises to the cell membrane. The catalysed reaction is K(+)(in) + H(+)(in) = K(+)(out) + H(+)(out). In terms of biological role, transport of potassium into the cell. Likely operates as a K(+):H(+) symporter. This Lactobacillus johnsonii (strain CNCM I-12250 / La1 / NCC 533) protein is Probable potassium transport system protein Kup 1.